Reading from the N-terminus, the 280-residue chain is Type 1 encapsulin shell protein (280 aa).

Belongs to the encapsulin family. Family 1 subfamily. As to quaternary structure, this encapsulin nanocompartment is formed by 60 subunits; monomers form pentamers which assemble to form shells. There are 12 pores where the pentamers meet as well as 3-fold axis channels and dimer channels; none are larger than 3-4 Angstroms in diameter. The N-terminus of the protein is inside the shell, the C-terminus is outside.

The protein localises to the encapsulin nanocompartment. Functionally, shell component of a type 1 encapsulin nanocompartment. Assembles into proteinaceous icosahedral shells 24 nm in diameter in the presence and absence of its ferritin cargo protein. The center of cargo-loaded nanocompartments is loaded with iron. The empty encapsulin nanocompartment sequesters about 2200 Fe ions while the cargo-loaded nanocompartment can maximally sequester about 4150 Fe ions. Does not have any detectable ferroxidase activity. The protein is Type 1 encapsulin shell protein of Rhodospirillum rubrum (strain ATCC 11170 / ATH 1.1.1 / DSM 467 / LMG 4362 / NCIMB 8255 / S1).